A 349-amino-acid chain; its full sequence is MVLLPWELEEDILSRLPPRSLVQFRSVCKRWNALFDVKSFNKDQFARARPQFIFITDSKIYSIEIIGLDGVDPTIKLHVLDSSGIPYREWKFAYLTITACDGRWIKWIEYENKGFNVCGVGYDNTRPEKVYKILEYLECRREESSNACYQRVAIYECASHAFKFIDTSNKVWFISDVQRYSVCLNGNLYWLSFDDFRILCFDFSREIVKPFCLLPCRKFDKCDLLALQVFKGDRLSLLNQCCKTRTIEIWVTKKKIDSSNNNGSDEVVWISLLTLPPNNLPNLFIVCYGISYFIYDKTTLIIYCEDENTSAACIYIIRGDLFKKFEIDSSAFFCYHCVYAPNFIPLPLM.

The 48-residue stretch at 1-48 folds into the F-box domain; that stretch reads MVLLPWELEEDILSRLPPRSLVQFRSVCKRWNALFDVKSFNKDQFARA. The stretch at 267–290 is one LRR repeat; the sequence is VVWISLLTLPPNNLPNLFIVCYGI.

The protein is Putative F-box/LRR-repeat protein At3g16555 of Arabidopsis thaliana (Mouse-ear cress).